Reading from the N-terminus, the 189-residue chain is Small ribosomal subunit protein uS5 (189 aa).

The S5 DRBM domain maps to 22 to 85 (FVDKLVAINR…EAAKRELIFV (64 aa)).

It belongs to the universal ribosomal protein uS5 family. Part of the 30S ribosomal subunit. Contacts proteins S4 and S8.

Functionally, with S4 and S12 plays an important role in translational accuracy. In terms of biological role, located at the back of the 30S subunit body where it stabilizes the conformation of the head with respect to the body. This is Small ribosomal subunit protein uS5 from Rhizobium etli (strain CIAT 652).